The chain runs to 815 residues: Ent-sandaracopimara-8(14),15-diene synthase, chloroplastic (815 aa).

Residues 1-38 (MLPSSICSMGQIPRTSPHYYGMLPKQMSKGHPPMVTRA) constitute a chloroplast transit peptide. Mg(2+) is bound by residues aspartate 550, aspartate 554, asparagine 696, threonine 700, and glutamate 704. The DDXXD motif motif lies at 550 to 554 (DDFFD).

The protein belongs to the terpene synthase family. Mg(2+) serves as cofactor.

It is found in the plastid. The protein resides in the chloroplast. It catalyses the reaction ent-copalyl diphosphate = ent-sandaracopimara-8(14),15-diene + diphosphate. It carries out the reaction 9alpha-copalyl diphosphate = (12E)-9alpha-labda-8(17),12,14-triene + diphosphate. Functionally, involved in the biosynthesis of oryzalexin A-F phytoalexins. Catalyzes the conversion of ent-copalyl diphosphate to the phytoalexin precursor ent-sandaracopimaradiene. The sequence is that of Ent-sandaracopimara-8(14),15-diene synthase, chloroplastic from Oryza sativa subsp. japonica (Rice).